A 122-amino-acid polypeptide reads, in one-letter code: Large ribosomal subunit protein uL14c (122 aa).

This sequence belongs to the universal ribosomal protein uL14 family. In terms of assembly, part of the 50S ribosomal subunit.

Its subcellular location is the plastid. It is found in the chloroplast. In terms of biological role, binds to 23S rRNA. The polypeptide is Large ribosomal subunit protein uL14c (Physcomitrium patens (Spreading-leaved earth moss)).